The following is a 467-amino-acid chain: Gamma-aminobutyric acid receptor subunit gamma-3 (467 aa).

The N-terminal stretch at 1-17 (MAAKLLLLLCLFSGLHA) is a signal peptide. Topologically, residues 18–256 (RSRRVEEDDS…FELSRRMGYF (239 aa)) are extracellular. Asn-110 carries N-linked (GlcNAc...) asparagine glycosylation. The cysteines at positions 171 and 185 are disulfide-linked. Asn-228 is a glycosylation site (N-linked (GlcNAc...) asparagine). The chain crosses the membrane as a helical span at residues 257 to 277 (TIQTYIPCILTVVLSWVSFWI). The Cytoplasmic segment spans residues 278-283 (KKDATP). Residues 284–303 (ARTTLGITTVLTMTTLSTIA) traverse the membrane as a helical segment. The Extracellular portion of the chain corresponds to 304–311 (RKSLPRVS). A helical membrane pass occupies residues 312–332 (YVTAMDLFVTVCFLFVFAALM). Residues 333–446 (EYATLNYYSS…DVSELDSYSR (114 aa)) are Cytoplasmic-facing. Residues 447–467 (VFFPTSFLLFNLVYWVGYLYL) form a helical membrane-spanning segment.

Belongs to the ligand-gated ion channel (TC 1.A.9) family. Gamma-aminobutyric acid receptor (TC 1.A.9.5) subfamily. GABRG3 sub-subfamily. As to quaternary structure, heteropentamer, formed by a combination of alpha (GABRA1-6), beta (GABRB1-3), gamma (GABRG1-3), delta (GABRD), epsilon (GABRE), rho (GABRR1-3), pi (GABRP) and theta (GABRQ) chains, each subunit exhibiting distinct physiological and pharmacological properties. Post-translationally, may be palmitoylated. Expressed in brain.

The protein resides in the postsynaptic cell membrane. It localises to the cell membrane. The enzyme catalyses chloride(in) = chloride(out). Allosterically potentiated by alphaxalone. Allosterically inhibited by pregnenolone sulfate. Inhibited by zinc and lanthanum. In terms of biological role, gamma subunit of the heteropentameric ligand-gated chloride channel gated by gamma-aminobutyric acid (GABA), a major inhibitory neurotransmitter in the brain. GABA-gated chloride channels, also named GABA(A) receptors (GABAAR), consist of five subunits arranged around a central pore and contain GABA active binding site(s) located at the alpha and beta subunit interface(s). When activated by GABA, GABAARs selectively allow the flow of chloride across the cell membrane down their electrochemical gradient. In Rattus norvegicus (Rat), this protein is Gamma-aminobutyric acid receptor subunit gamma-3.